The primary structure comprises 830 residues: FYN-binding protein 1 (830 aa).

Positions 1–501 (MDGKTDVKSL…REKKEQELRK (501 aa)) are disordered. At lysine 13 the chain carries N6-acetyllysine. Positions 15–55 (NTGSNPTEEVSTSSRPFKVAGQNSPSGIQSKKNLFDNQGNA) are enriched in polar residues. Residues serine 38 and serine 56 each carry the phosphoserine modification. Positions 79–89 (TYEEKSEKEPK) are enriched in basic and acidic residues. Serine 233 carries the post-translational modification Phosphoserine. 2 stretches are compositionally biased toward basic and acidic residues: residues 248 to 259 (PAKEDPEDKDHG) and 284 to 296 (NSEEKKEERKTDI). Serine 329 is subject to Phosphoserine. Residues 330–339 (QEKEGDKDSA) are compositionally biased toward basic and acidic residues. 2 stretches are compositionally biased toward pro residues: residues 344 to 362 (KPLPPLSVLGPPPSKPSRP) and 391 to 407 (LPPPPPTQPASQPPLPA). The segment at 347–447 (PPLSVLGPPP…QDGVMHSDGT (101 aa)) is interaction with SKAP1. Residues 450-464 (LEEEQESDGEMYEDI) are compositionally biased toward acidic residues. At serine 456 the chain carries Phosphoserine. The SH2-binding signature appears at 461-464 (YEDI). Positions 465 to 500 (ESSKERDKKREKEEKKRLELERKEQKEREKKEQELR) are enriched in basic and acidic residues. Residues 465-502 (ESSKERDKKREKEEKKRLELERKEQKEREKKEQELRKK) adopt a coiled-coil conformation. The Nuclear localization signal motif lies at 479 to 486 (KKRLELER). One can recognise an SH3 1 domain in the interval 510-571 (QVIHHAKACC…KTTAVKIDYD (62 aa)). Tyrosine 570 carries the phosphotyrosine modification. Serine 572 carries the phosphoserine modification. An SH2-binding; to LCP2 motif is present at residues 595 to 598 (YDDV). Disordered regions lie at residues 601 to 646 (QDAP…DEKT) and 660 to 739 (KDER…EKEE). Residues 621 to 636 (ADDDIYDGIEEEDADD) are compositionally biased toward acidic residues. Residues 626–629 (YDGI) carry the SH2-binding; to FYN motif. Positions 660 to 675 (KDERKKSIREKPKVSE) are enriched in basic and acidic residues. Residues 693–703 (VGEEVYDDVDA) are compositionally biased toward acidic residues. Phosphotyrosine is present on tyrosine 698. The segment covering 722–739 (TKAEEKDPKKLKKQEKEE) has biased composition (basic and acidic residues). The Nuclear localization signal motif lies at 732–739 (LKKQEKEE). In terms of domain architecture, SH3 2 spans 747–815 (KYDGEIRVLY…LRSYLVDNDG (69 aa)).

As to quaternary structure, part of a complex consisting of SKAP2, FYB1 and PTPNS1. Part of a complex consisting of SKAP2, FYB1 and LILRB3. Part of a complex consisting of SKAP1, FYB1 and CLNK. Interacts with CLNK (via its SH2 domain) and FYN; this interaction allows SKAP1 and FYB1 to recruit FYN to the complex, thus promoting the phosphorylation of CLNK by FYN. Interacts with FYN. Interacts with LCP2. Interacts with SKAP1. Interacts with SKAP2. Interacts with FASLG. Interacts with EVL. Interacts with TMEM47. Interacts with LCK. T-cell receptor ligation leads to increased tyrosine phosphorylation.

It localises to the cytoplasm. Its subcellular location is the nucleus. It is found in the cell junction. In terms of biological role, acts as an adapter protein of the FYN and LCP2 signaling cascades in T-cells. May play a role in linking T-cell signaling to remodeling of the actin cytoskeleton. Modulates the expression of IL2. Involved in platelet activation. Prevents the degradation of SKAP1 and SKAP2. May be involved in high affinity immunoglobulin epsilon receptor signaling in mast cells. The chain is FYN-binding protein 1 from Rattus norvegicus (Rat).